Here is a 231-residue protein sequence, read N- to C-terminus: Small ribosomal subunit protein uS3 (231 aa).

The KH type-2 domain occupies 39-108 (IKNYIKKRYK…EISISVLEVK (70 aa)).

The protein belongs to the universal ribosomal protein uS3 family. In terms of assembly, part of the 30S ribosomal subunit. Forms a tight complex with proteins S10 and S14.

Binds the lower part of the 30S subunit head. Binds mRNA in the 70S ribosome, positioning it for translation. The protein is Small ribosomal subunit protein uS3 of Aquifex pyrophilus.